The primary structure comprises 125 residues: Protein ApaG (125 aa).

The ApaG domain maps to 1–125 (MFTSSKVAIQ…FRLAIPTLIN (125 aa)).

The chain is Protein ApaG from Proteus mirabilis (strain HI4320).